The primary structure comprises 557 residues: MSLSTLKRDHIKKNLRDTEYDVVIVGGGITGAGIALDASNRGMKVALVEMQDFAQGTSSRSTKLVHGGLRYLKQLQVGVVAETGKERAIVYENGPHVTTPEWMLLPMHKGGTFGKFSTSIGLAMYDRLAGVKKSERKKMLSKQETLNKEPLVKRDGLKGGGYYVEYRTDDARLTIEVMKKAAENGAEILNYTKSEHFTYDSNKKVNGIEVLDMIDGETYAIKAKKVINASGPWVDEVRSGDYARNNKQLRLTKGVHVVIDQSKFPLGQAVYFDTEKDGRMIFAIPREGKAYVGTTDTFYDNEKATPLTTQEDRDYLINAINYMFPTVNVKDEDIESTWAGIRPLILEKGKDPSEISRKDEVWEGESGLLTIAGGKLTGYRHMALEIVDLLAKRLKQEYGLKFESCATKNLKISGGDVGGSKNFEHFVEQKVDAAKGFGIDEDVARRLASKYGSNVDQLFNIAQTAPYHDSKLPLEIYVELVYSIQQEMVYKPTDFLVRRSGKLYFNIQDVLDYKNAVIDVMADMLNYSETQKEAYTEEVEVAIDEARTGNDQPATKA.

Position 21–49 (21–49 (DVVIVGGGITGAGIALDASNRGMKVALVE)) interacts with FAD.

This sequence belongs to the FAD-dependent glycerol-3-phosphate dehydrogenase family. Requires FAD as cofactor.

It is found in the cytoplasm. It catalyses the reaction a quinone + sn-glycerol 3-phosphate = dihydroxyacetone phosphate + a quinol. It functions in the pathway polyol metabolism; glycerol degradation via glycerol kinase pathway; glycerone phosphate from sn-glycerol 3-phosphate (aerobic route): step 1/1. In Staphylococcus epidermidis (strain ATCC 35984 / DSM 28319 / BCRC 17069 / CCUG 31568 / BM 3577 / RP62A), this protein is Aerobic glycerol-3-phosphate dehydrogenase (glpD).